We begin with the raw amino-acid sequence, 411 residues long: MRCEILSVGTELLLGDILNTNSQYLSRRLAELGIPVYFHTTVGDNPERLKKALEIAFSRSDMVIATGGLGPTQDDLTKEVSAEFFNKKLVLHEESLKRIKEFFEKRGLALTEGNIKQAYIVEGSRVIPNDWGTAPGIILEEGNKILILLPGPPKEMIPMFETYVVPYLLSFSSGIIHSRVLRVCGIGESFMEEKVKDLIKTQTNPTIAPYAKEGEAILRVTARADTKEEAEKMIERVVEEIRKRLGDYIYGEGETSLEEVVVDLLSKKSLTISIAESCTGGLISARLVNVPGVSKFFKGSLVAYDNEIKIRELNVPREIIEKYGAVSSQCAMKMAEGVAQKMGTDIGLSATGIAGPEGGTPEKPVGLVYIGLYIRGELSYKELRLSGDRNRIRLYTTINALDFLRRGLLNL.

The protein belongs to the CinA family.

In Dictyoglomus thermophilum (strain ATCC 35947 / DSM 3960 / H-6-12), this protein is CinA-like protein.